Consider the following 320-residue polypeptide: Lipoyl synthase (320 aa).

Positions 67, 72, 78, 93, 97, 100, and 307 each coordinate [4Fe-4S] cluster. In terms of domain architecture, Radical SAM core spans 79–296; the sequence is FNHGTATFMI…RDKANEMGFE (218 aa).

This sequence belongs to the radical SAM superfamily. Lipoyl synthase family. [4Fe-4S] cluster serves as cofactor.

The protein resides in the cytoplasm. It carries out the reaction [[Fe-S] cluster scaffold protein carrying a second [4Fe-4S](2+) cluster] + N(6)-octanoyl-L-lysyl-[protein] + 2 oxidized [2Fe-2S]-[ferredoxin] + 2 S-adenosyl-L-methionine + 4 H(+) = [[Fe-S] cluster scaffold protein] + N(6)-[(R)-dihydrolipoyl]-L-lysyl-[protein] + 4 Fe(3+) + 2 hydrogen sulfide + 2 5'-deoxyadenosine + 2 L-methionine + 2 reduced [2Fe-2S]-[ferredoxin]. It functions in the pathway protein modification; protein lipoylation via endogenous pathway; protein N(6)-(lipoyl)lysine from octanoyl-[acyl-carrier-protein]: step 2/2. Functionally, catalyzes the radical-mediated insertion of two sulfur atoms into the C-6 and C-8 positions of the octanoyl moiety bound to the lipoyl domains of lipoate-dependent enzymes, thereby converting the octanoylated domains into lipoylated derivatives. In Haemophilus influenzae (strain 86-028NP), this protein is Lipoyl synthase.